The following is a 401-amino-acid chain: Formate dehydrogenase (401 aa).

Substrate contacts are provided by Ile123 and Asn147. NAD(+) contacts are provided by residues Ser148, 202 to 203 (RI), Asp222, 257 to 261 (PLHPE), Thr283, Asp309, 333 to 336 (HISG), and Ser381.

This sequence belongs to the D-isomer specific 2-hydroxyacid dehydrogenase family. FDH subfamily. As to quaternary structure, homodimer.

It localises to the cytoplasm. It carries out the reaction formate + NAD(+) = CO2 + NADH. Catalyzes the NAD(+)-dependent oxidation of formate to carbon dioxide. Formate oxidation is the final step in the methanol oxidation pathway in methylotrophic microorganisms. Has a role in the detoxification of exogenous formate in non-methylotrophic organisms. The polypeptide is Formate dehydrogenase (Pseudomonas sp. (strain 101) (Achromobacter parvulus T1)).